Reading from the N-terminus, the 546-residue chain is Chaperonin GroEL (546 aa).

ATP contacts are provided by residues 30–33 (TLGP), Lys-51, 87–91 (DGTTT), Gly-415, 479–481 (NAA), and Asp-495. Positions 526–546 (KEDAPMPGGMPGGMGGMGMDM) are disordered. A compositionally biased stretch (gly residues) spans 534–546 (GMPGGMGGMGMDM).

It belongs to the chaperonin (HSP60) family. As to quaternary structure, forms a cylinder of 14 subunits composed of two heptameric rings stacked back-to-back. Interacts with the co-chaperonin GroES.

The protein localises to the cytoplasm. It catalyses the reaction ATP + H2O + a folded polypeptide = ADP + phosphate + an unfolded polypeptide.. In terms of biological role, together with its co-chaperonin GroES, plays an essential role in assisting protein folding. The GroEL-GroES system forms a nano-cage that allows encapsulation of the non-native substrate proteins and provides a physical environment optimized to promote and accelerate protein folding. The chain is Chaperonin GroEL from Burkholderia thailandensis.